A 372-amino-acid polypeptide reads, in one-letter code: tRNA pseudouridine synthase D (372 aa).

Asp-85 (nucleophile) is an active-site residue. The TRUD domain occupies 160-330 (GFANYFGYQR…MQGSRRFMWG (171 aa)).

Belongs to the pseudouridine synthase TruD family.

It catalyses the reaction uridine(13) in tRNA = pseudouridine(13) in tRNA. Functionally, responsible for synthesis of pseudouridine from uracil-13 in transfer RNAs. This Campylobacter jejuni subsp. jejuni serotype O:2 (strain ATCC 700819 / NCTC 11168) protein is tRNA pseudouridine synthase D.